The chain runs to 81 residues: ATP synthase subunit c, chloroplastic (81 aa).

The next 2 membrane-spanning stretches (helical) occupy residues 3 to 23 and 57 to 77; these read PLIS…ASIG and LAFM…LLFA.

It belongs to the ATPase C chain family. F-type ATPases have 2 components, F(1) - the catalytic core - and F(0) - the membrane proton channel. F(1) has five subunits: alpha(3), beta(3), gamma(1), delta(1), epsilon(1). F(0) has four main subunits: a(1), b(1), b'(1) and c(10-14). The alpha and beta chains form an alternating ring which encloses part of the gamma chain. F(1) is attached to F(0) by a central stalk formed by the gamma and epsilon chains, while a peripheral stalk is formed by the delta, b and b' chains.

The protein localises to the plastid. Its subcellular location is the chloroplast thylakoid membrane. F(1)F(0) ATP synthase produces ATP from ADP in the presence of a proton or sodium gradient. F-type ATPases consist of two structural domains, F(1) containing the extramembraneous catalytic core and F(0) containing the membrane proton channel, linked together by a central stalk and a peripheral stalk. During catalysis, ATP synthesis in the catalytic domain of F(1) is coupled via a rotary mechanism of the central stalk subunits to proton translocation. In terms of biological role, key component of the F(0) channel; it plays a direct role in translocation across the membrane. A homomeric c-ring of between 10-14 subunits forms the central stalk rotor element with the F(1) delta and epsilon subunits. The protein is ATP synthase subunit c, chloroplastic of Ipomoea purpurea (Common morning glory).